The following is a 119-amino-acid chain: Large ribosomal subunit protein bL20c (119 aa).

This sequence belongs to the bacterial ribosomal protein bL20 family.

The protein resides in the plastid. Its subcellular location is the chloroplast. Binds directly to 23S ribosomal RNA and is necessary for the in vitro assembly process of the 50S ribosomal subunit. It is not involved in the protein synthesizing functions of that subunit. The sequence is that of Large ribosomal subunit protein bL20c from Nandina domestica (Heavenly bamboo).